A 296-amino-acid chain; its full sequence is AUGMIN subunit 2 (296 aa).

2 coiled-coil regions span residues 56–83 and 253–285; these read DDLI…QGRK and AVHK…NRRL. The disordered stretch occupies residues 218-296; the sequence is AVSLPTTPGG…WPPSVKKSSV (79 aa). The span at 264-277 shows a compositional bias: acidic residues; it reads QNEEEEEEEEEEDG.

It belongs to the HAUS2 family. As to quaternary structure, part of the augmin complex composed of 8 subunits. The complex acts on microtubules and interacts with gamma-tubulin in spindles and the phragmoplast.

In terms of biological role, contributes to the assembly of the acentrosomal spindle and phragmoplast microtubule arrays as part of the augmin complex. The chain is AUGMIN subunit 2 from Arabidopsis thaliana (Mouse-ear cress).